The sequence spans 250 residues: MEWSDEGIILGVRRHGESAAIVELLTRGHGRHLGMVRGGASARMRPLLQPGNSVLASWRARLDEHLGYYQLEATKMRAATLLGSSHAVYGVTHLASLARLLPERDPHEEIYQRLVLTLDDFDDFGVAAAHLIRFELAILAELGFGLDLSACAATGSTTELIYVSPKSGSAVSRSAGEPWRDRLLRLPAFLRDDEAESGHGWSGQDLFDGFELTGRFLLRNVLEPRGQSHSDARAGFINAITRALQRPAES.

The protein belongs to the RecO family.

Involved in DNA repair and RecF pathway recombination. This Rhodopseudomonas palustris (strain ATCC BAA-98 / CGA009) protein is DNA repair protein RecO.